Here is a 321-residue protein sequence, read N- to C-terminus: uncharacterized protein (321 aa).

Over Met1–Ala5 the chain is Cytoplasmic. A helical membrane pass occupies residues Gly6–Met26. Residues Ile17 to Asn144 form the EamA 1 domain. The Periplasmic segment spans residues Lys27 to Pro35. A helical membrane pass occupies residues Pro36–Val56. Over Lys57–Arg70 the chain is Cytoplasmic. Residues Trp71–Ser91 traverse the membrane as a helical segment. Topologically, residues Ser92–Thr99 are periplasmic. A helical transmembrane segment spans residues Ala100–Leu120. Topologically, residues Lys121–Val130 are cytoplasmic. Residues Gly131–Phe151 form a helical membrane-spanning segment. Residues Thr152–Asp156 lie on the Periplasmic side of the membrane. Residues Tyr157–Ala177 traverse the membrane as a helical segment. The region spanning Thr169–Ala292 is the EamA 2 domain. Residues Gln178–Ile190 lie on the Cytoplasmic side of the membrane. Residues Leu191 to Ile211 form a helical membrane-spanning segment. The Periplasmic portion of the chain corresponds to Ala212–His216. Residues Trp217–Ala237 traverse the membrane as a helical segment. Topologically, residues Glu238 to Ser249 are cytoplasmic. Residues Ala250–Trp270 form a helical membrane-spanning segment. The Periplasmic portion of the chain corresponds to Pro271–Met278. The helical transmembrane segment at Leu279 to Ile299 threads the bilayer. Over Gly300–Glu321 the chain is Cytoplasmic.

The protein belongs to the EamA transporter family.

Its subcellular location is the cell inner membrane. This is an uncharacterized protein from Escherichia coli O157:H7.